The primary structure comprises 232 residues: Small ribosomal subunit protein uS3 (232 aa).

The 69-residue stretch at 39–107 (IRAFLKKKLY…EVNVNIKEER (69 aa)) folds into the KH type-2 domain. Positions 212–232 (VQPEKTEDDAPKKTRRPRRGK) are disordered. Residues 213–223 (QPEKTEDDAPK) are compositionally biased toward basic and acidic residues.

It belongs to the universal ribosomal protein uS3 family. In terms of assembly, part of the 30S ribosomal subunit. Forms a tight complex with proteins S10 and S14.

Its function is as follows. Binds the lower part of the 30S subunit head. Binds mRNA in the 70S ribosome, positioning it for translation. This is Small ribosomal subunit protein uS3 from Campylobacter curvus (strain 525.92).